Reading from the N-terminus, the 544-residue chain is CTP synthase (544 aa).

The tract at residues 1-265 is amidoligase domain; it reads MTKFIFVTGG…DDIICEHLDL (265 aa). Serine 13 is a binding site for CTP. Serine 13 contacts UTP. ATP-binding positions include 14–19 and aspartate 71; that span reads SLGKGI. Aspartate 71 and glutamate 139 together coordinate Mg(2+). Residues 146-148, 186-191, and lysine 222 each bind CTP; these read DIE and KTKPTQ. UTP contacts are provided by residues 186-191 and lysine 222; that span reads KTKPTQ. A Glutamine amidotransferase type-1 domain is found at 290-542; that stretch reads NIAMVGKYVD…VEAALAYQAD (253 aa). Residue glycine 351 participates in L-glutamine binding. Residue cysteine 378 is the Nucleophile; for glutamine hydrolysis of the active site. Residues 379–382, glutamate 402, and arginine 469 each bind L-glutamine; that span reads LGMQ. Active-site residues include histidine 515 and glutamate 517.

The protein belongs to the CTP synthase family. In terms of assembly, homotetramer.

The enzyme catalyses UTP + L-glutamine + ATP + H2O = CTP + L-glutamate + ADP + phosphate + 2 H(+). It catalyses the reaction L-glutamine + H2O = L-glutamate + NH4(+). The catalysed reaction is UTP + NH4(+) + ATP = CTP + ADP + phosphate + 2 H(+). It functions in the pathway pyrimidine metabolism; CTP biosynthesis via de novo pathway; CTP from UDP: step 2/2. Its activity is regulated as follows. Allosterically activated by GTP, when glutamine is the substrate; GTP has no effect on the reaction when ammonia is the substrate. The allosteric effector GTP functions by stabilizing the protein conformation that binds the tetrahedral intermediate(s) formed during glutamine hydrolysis. Inhibited by the product CTP, via allosteric rather than competitive inhibition. Its function is as follows. Catalyzes the ATP-dependent amination of UTP to CTP with either L-glutamine or ammonia as the source of nitrogen. Regulates intracellular CTP levels through interactions with the four ribonucleotide triphosphates. This Laribacter hongkongensis (strain HLHK9) protein is CTP synthase.